Reading from the N-terminus, the 458-residue chain is Peptidyl-prolyl cis-trans isomerase FKBP4 (458 aa).

Methionine 1 carries the post-translational modification N-acetylmethionine; in peptidyl-prolyl cis-trans isomerase FKBP4; alternate. Residue threonine 2 is modified to N-acetylthreonine; in peptidyl-prolyl cis-trans isomerase FKBP4, N-terminally processed; partial. Positions glycine 50–lysine 138 constitute a PPIase FKBP-type 1 domain. Threonine 143 is modified (phosphothreonine; by CK2). One can recognise a PPIase FKBP-type 2 domain in the interval glycine 167–glutamate 253. Tyrosine 220 bears the Phosphotyrosine mark. Residues leucine 267 to threonine 400 are interaction with tubulin. 3 TPR repeats span residues serine 270–glutamate 303, leucine 319–asparagine 352, and glutamate 353–asparagine 386. Lysine 282 carries the N6-acetyllysine modification. Residue arginine 373 is modified to Omega-N-methylarginine. The segment at histidine 423–alanine 458 is disordered. The residue at position 436 (threonine 436) is a Phosphothreonine. Residue lysine 441 forms a Glycyl lysine isopeptide (Lys-Gly) (interchain with G-Cter in SUMO1) linkage. Positions valine 447 to alanine 458 are enriched in polar residues.

Homodimer. Interacts with GLMN. Associates with HSP90AA1 and HSP70 in steroid hormone receptor complexes. Also interacts with peroxisomal phytanoyl-CoA alpha-hydroxylase (PHYH). Interacts with NR3C1 and dynein. Interacts with HSF1 in the HSP90 complex. Associates with tubulin. Interacts with MAPT/TAU. Interacts (via TPR domain) with S100A1, S100A2 and S100A6; the interaction is Ca(2+) dependent. Interaction with S100A1 and S100A2 (but not with S100A6) leads to inhibition of FKBP4-HSP90 interaction. Interacts with dynein; causes partially NR3C1 transport to the nucleus. Post-translationally, phosphorylation by CK2 results in loss of HSP90 binding activity. Widely detected in the brain (at protein level).

The protein localises to the cytoplasm. It is found in the cytosol. It localises to the mitochondrion. Its subcellular location is the nucleus. The protein resides in the cytoskeleton. The protein localises to the cell projection. It is found in the axon. It catalyses the reaction [protein]-peptidylproline (omega=180) = [protein]-peptidylproline (omega=0). Its activity is regulated as follows. Inhibited by FK506. Functionally, immunophilin protein with PPIase and co-chaperone activities. Component of unligated steroid receptors heterocomplexes through interaction with heat-shock protein 90 (HSP90). Plays a role in the intracellular trafficking of heterooligomeric forms of steroid hormone receptors between cytoplasm and nuclear compartments. May have a protective role against oxidative stress in mitochondria. Also acts as a regulator of microtubule dynamics by inhibiting MAPT/TAU ability to promote microtubule assembly. The PPIase activity controls neuronal growth cones via regulation of TRPC1 channel opening. This chain is Peptidyl-prolyl cis-trans isomerase FKBP4 (Fkbp4), found in Rattus norvegicus (Rat).